The following is a 161-amino-acid chain: uncharacterized protein (161 aa).

The helical transmembrane segment at 76 to 94 (ISISSQCIFNVVILSFVFT) threads the bilayer.

The protein localises to the membrane. This is an uncharacterized protein from Saccharomyces cerevisiae (strain ATCC 204508 / S288c) (Baker's yeast).